The sequence spans 257 residues: 3-methyl-2-oxobutanoate hydroxymethyltransferase (257 aa).

The Mg(2+) site is built by Asp-42 and Asp-81. Residues 42 to 43 (DS), Asp-81, and Lys-110 contribute to the 3-methyl-2-oxobutanoate site. Residue Glu-112 participates in Mg(2+) binding. The active-site Proton acceptor is Glu-176.

This sequence belongs to the PanB family. In terms of assembly, homodecamer; pentamer of dimers. Mg(2+) is required as a cofactor.

It is found in the cytoplasm. It catalyses the reaction 3-methyl-2-oxobutanoate + (6R)-5,10-methylene-5,6,7,8-tetrahydrofolate + H2O = 2-dehydropantoate + (6S)-5,6,7,8-tetrahydrofolate. The protein operates within cofactor biosynthesis; (R)-pantothenate biosynthesis; (R)-pantoate from 3-methyl-2-oxobutanoate: step 1/2. Catalyzes the reversible reaction in which hydroxymethyl group from 5,10-methylenetetrahydrofolate is transferred onto alpha-ketoisovalerate to form ketopantoate. The protein is 3-methyl-2-oxobutanoate hydroxymethyltransferase of Pelagibacter ubique (strain HTCC1062).